The primary structure comprises 145 residues: Ribosome maturation factor RimP (145 aa).

Belongs to the RimP family.

The protein localises to the cytoplasm. Its function is as follows. Required for maturation of 30S ribosomal subunits. This is Ribosome maturation factor RimP from Borrelia garinii subsp. bavariensis (strain ATCC BAA-2496 / DSM 23469 / PBi) (Borreliella bavariensis).